We begin with the raw amino-acid sequence, 277 residues long: NAD kinase (277 aa).

The active-site Proton acceptor is the D55. Residues 55 to 56 (DG), 131 to 132 (NE), R157, D159, and 170 to 175 (TAYNKS) contribute to the NAD(+) site.

This sequence belongs to the NAD kinase family. The cofactor is a divalent metal cation.

The protein resides in the cytoplasm. It carries out the reaction NAD(+) + ATP = ADP + NADP(+) + H(+). In terms of biological role, involved in the regulation of the intracellular balance of NAD and NADP, and is a key enzyme in the biosynthesis of NADP. Catalyzes specifically the phosphorylation on 2'-hydroxyl of the adenosine moiety of NAD to yield NADP. The chain is NAD kinase from Streptococcus mutans serotype c (strain ATCC 700610 / UA159).